The sequence spans 500 residues: L-arabinose isomerase (500 aa).

Glu-306, Glu-333, His-349, and His-448 together coordinate Mn(2+).

The protein belongs to the arabinose isomerase family. Mn(2+) serves as cofactor.

The catalysed reaction is beta-L-arabinopyranose = L-ribulose. It functions in the pathway carbohydrate degradation; L-arabinose degradation via L-ribulose; D-xylulose 5-phosphate from L-arabinose (bacterial route): step 1/3. Functionally, catalyzes the conversion of L-arabinose to L-ribulose. In Koribacter versatilis (strain Ellin345), this protein is L-arabinose isomerase.